The chain runs to 203 residues: Protein GrpE (203 aa).

Basic and acidic residues predominate over residues 1 to 10 (MSNESIKAEQ). The tract at residues 1–20 (MSNESIKAEQDLIQEGVESE) is disordered.

This sequence belongs to the GrpE family. Homodimer.

Its subcellular location is the cytoplasm. Its function is as follows. Participates actively in the response to hyperosmotic and heat shock by preventing the aggregation of stress-denatured proteins, in association with DnaK and GrpE. It is the nucleotide exchange factor for DnaK and may function as a thermosensor. Unfolded proteins bind initially to DnaJ; upon interaction with the DnaJ-bound protein, DnaK hydrolyzes its bound ATP, resulting in the formation of a stable complex. GrpE releases ADP from DnaK; ATP binding to DnaK triggers the release of the substrate protein, thus completing the reaction cycle. Several rounds of ATP-dependent interactions between DnaJ, DnaK and GrpE are required for fully efficient folding. The chain is Protein GrpE from Shewanella sp. (strain MR-7).